A 115-amino-acid polypeptide reads, in one-letter code: Large ribosomal subunit protein bL21 (115 aa).

The protein belongs to the bacterial ribosomal protein bL21 family. As to quaternary structure, part of the 50S ribosomal subunit. Contacts protein L20.

This protein binds to 23S rRNA in the presence of protein L20. The sequence is that of Large ribosomal subunit protein bL21 from Coxiella burnetii (strain RSA 331 / Henzerling II).